A 117-amino-acid chain; its full sequence is Large ribosomal subunit protein bL20 (117 aa).

The protein belongs to the bacterial ribosomal protein bL20 family.

Functionally, binds directly to 23S ribosomal RNA and is necessary for the in vitro assembly process of the 50S ribosomal subunit. It is not involved in the protein synthesizing functions of that subunit. This Geotalea uraniireducens (strain Rf4) (Geobacter uraniireducens) protein is Large ribosomal subunit protein bL20.